A 300-amino-acid polypeptide reads, in one-letter code: 17-beta-hydroxysteroid dehydrogenase 13 (300 aa).

Residues 1–19 form the signal peptide; sequence MNIILEILLLLITIIYSYL. Ser-33 carries the post-translational modification Phosphoserine. 40 to 67 is an NAD(+) binding site; that stretch reads LITGAGHGIGRQTTYEFAKRQSILVLWD. A substrate-binding site is contributed by Ser-172. The active-site Proton acceptor is Tyr-185. Position 189 (Lys-189) interacts with NAD(+).

It belongs to the short-chain dehydrogenases/reductases (SDR) family. As to expression, highly expressed in the liver. Also detected in ovary, bone marrow, kidney, brain, lung, skeletal muscle, bladder and testis.

The protein resides in the lipid droplet. It is found in the endoplasmic reticulum. The protein localises to the cytoplasm. It carries out the reaction 17beta-estradiol + NAD(+) = estrone + NADH + H(+). The catalysed reaction is all-trans-retinol + NAD(+) = all-trans-retinal + NADH + H(+). It catalyses the reaction all-trans-retinal + NAD(+) + H2O = all-trans-retinoate + NADH + 2 H(+). Functionally, plays a pivotal role in hepatic lipid metabolism. In vitro, it catalyzes the oxidation of a variety of lipid substrates, including 17beta-estradiol, retinol, retinal, and leukotriene B4. Its function is as follows. Has retinol/retinal dehydrogenase activity in vitro. In terms of biological role, does not have retinol/retinal dehydrogenase activity in vitro. This Homo sapiens (Human) protein is 17-beta-hydroxysteroid dehydrogenase 13.